Reading from the N-terminus, the 218-residue chain is Pyridoxine/pyridoxamine 5'-phosphate oxidase (218 aa).

Substrate contacts are provided by residues 14–17 and Lys72; that span reads RREY. FMN-binding positions include 67–72, 82–83, Arg88, Lys89, and Gln111; these read RIVLLK and YT. Positions 129, 133, and 137 each coordinate substrate. FMN is bound by residues 146–147 and Trp191; that span reads QS. A substrate-binding site is contributed by 197-199; that stretch reads RLH. FMN is bound at residue Arg201.

It belongs to the pyridoxamine 5'-phosphate oxidase family. In terms of assembly, homodimer. The cofactor is FMN.

The enzyme catalyses pyridoxamine 5'-phosphate + O2 + H2O = pyridoxal 5'-phosphate + H2O2 + NH4(+). The catalysed reaction is pyridoxine 5'-phosphate + O2 = pyridoxal 5'-phosphate + H2O2. Its pathway is cofactor metabolism; pyridoxal 5'-phosphate salvage; pyridoxal 5'-phosphate from pyridoxamine 5'-phosphate: step 1/1. It participates in cofactor metabolism; pyridoxal 5'-phosphate salvage; pyridoxal 5'-phosphate from pyridoxine 5'-phosphate: step 1/1. Its function is as follows. Catalyzes the oxidation of either pyridoxine 5'-phosphate (PNP) or pyridoxamine 5'-phosphate (PMP) into pyridoxal 5'-phosphate (PLP). The sequence is that of Pyridoxine/pyridoxamine 5'-phosphate oxidase from Salmonella typhi.